A 45-amino-acid polypeptide reads, in one-letter code: Ice-structuring protein SS-8 (45 aa).

M1 carries the blocked amino end (Met) modification. 3 consecutive repeats follow at residues 9–21, 22–33, and 34–45; these read KAARLAAAAALAA, KTAADAAAKAAA, and KAAAIAAAAASA.

It belongs to the type-I AFP family.

In terms of biological role, antifreeze proteins lower the blood freezing point. The polypeptide is Ice-structuring protein SS-8 (Myoxocephalus scorpius (Shorthorn sculpin)).